A 250-amino-acid chain; its full sequence is MSNPESAKKQVDPPGYNELFMVRDTRNVDLERGLELCKPEKVNKQNLFTNIIKPQKDKINIKTDKIKFFLNNLFTEFSKFHDSCYPDGRISTRSKLRWPLLIIWCILIVFAIDKNFEVKDFLSIWINESFINENRFYSEIWGPIAIYICLFILLLLGLICMFPLHLCRVCVLALRETGMIIAVLGAALGMIIAALGATITGLLYFSHWALYKVVILALDLKIEPFKDEIAFLTLPTHNGETLSIRDNNQS.

The next 3 helical transmembrane spans lie at 98-118 (WPLL…NFEV), 144-164 (IAIY…MFPL), and 179-199 (MIIA…GATI).

This sequence belongs to the UPF0494 family.

It localises to the cytoplasm. It is found in the endoplasmic reticulum. Its subcellular location is the golgi apparatus. The protein resides in the membrane. The sequence is that of UPF0494 membrane protein PB2B2.07c from Schizosaccharomyces pombe (strain 972 / ATCC 24843) (Fission yeast).